Consider the following 397-residue polypeptide: Succinate--CoA ligase [ADP-forming] subunit beta (397 aa).

The 246-residue stretch at 9–254 folds into the ATP-grasp domain; it reads KELLRGYGAP…TSEEDEKEIE (246 aa). Residues Lys-46, 53-55, Glu-109, Ala-112, and Glu-117 contribute to the ATP site; that span reads GRG. Mg(2+) contacts are provided by Asn-209 and Asp-223. Substrate contacts are provided by residues Asn-274 and 331 to 333; that span reads GIM.

It belongs to the succinate/malate CoA ligase beta subunit family. In terms of assembly, heterotetramer of two alpha and two beta subunits. The cofactor is Mg(2+).

The enzyme catalyses succinate + ATP + CoA = succinyl-CoA + ADP + phosphate. It carries out the reaction GTP + succinate + CoA = succinyl-CoA + GDP + phosphate. The protein operates within carbohydrate metabolism; tricarboxylic acid cycle; succinate from succinyl-CoA (ligase route): step 1/1. Functionally, succinyl-CoA synthetase functions in the citric acid cycle (TCA), coupling the hydrolysis of succinyl-CoA to the synthesis of either ATP or GTP and thus represents the only step of substrate-level phosphorylation in the TCA. The beta subunit provides nucleotide specificity of the enzyme and binds the substrate succinate, while the binding sites for coenzyme A and phosphate are found in the alpha subunit. The protein is Succinate--CoA ligase [ADP-forming] subunit beta of Chelativorans sp. (strain BNC1).